The primary structure comprises 308 residues: UDP-N-acetylenolpyruvoylglucosamine reductase (308 aa).

In terms of domain architecture, FAD-binding PCMH-type spans V32–G196. Residue R176 is part of the active site. S225 (proton donor) is an active-site residue. E296 is a catalytic residue.

It belongs to the MurB family. Requires FAD as cofactor.

It localises to the cytoplasm. It carries out the reaction UDP-N-acetyl-alpha-D-muramate + NADP(+) = UDP-N-acetyl-3-O-(1-carboxyvinyl)-alpha-D-glucosamine + NADPH + H(+). Its pathway is cell wall biogenesis; peptidoglycan biosynthesis. Functionally, cell wall formation. In Legionella pneumophila subsp. pneumophila (strain Philadelphia 1 / ATCC 33152 / DSM 7513), this protein is UDP-N-acetylenolpyruvoylglucosamine reductase.